A 508-amino-acid chain; its full sequence is Octopamine receptor beta-1R (508 aa).

Residues 1-111 (MTLLQRLQAM…SHLALVFVKC (111 aa)) are Extracellular-facing. The chain crosses the membrane as a helical span at residues 112–132 (FIIGFIILAAILGNMLVIVSV). The Cytoplasmic portion of the chain corresponds to 133-139 (MRHRKLR). The helical transmembrane segment at 140-160 (IITNYFVVSLAVADMLVALCA) threads the bilayer. Over 161–186 (MTFNASVMISGKWMFGSVMCDMWNSF) the chain is Extracellular. N-linked (GlcNAc...) asparagine glycosylation occurs at asparagine 164. A helical transmembrane segment spans residues 187–209 (DVYFSTASIMHLCCISVDRYYAI). At 210–223 (VQPLDYPLIMTQRR) the chain is on the cytoplasmic side. A helical membrane pass occupies residues 224-244 (VFIMLLMVWLSPALLSFLPIC). At 245 to 270 (SGWYTTTENYKYLKSNPHICEFKVNK) the chain is on the extracellular side. A helical transmembrane segment spans residues 271-291 (AYAIVSSSMSFWIPGIVMLSM). At 292 to 351 (YYRIYQEADRQERLVYRSKVAALLLEKHLQISQIPKPRPSIQVEQSTISTMRRERKAART) the chain is on the cytoplasmic side. A helical transmembrane segment spans residues 352–372 (LGIIMSAFLICWLPFFLWYIV). Topologically, residues 373–383 (SSLCDSCITPR) are extracellular. The chain crosses the membrane as a helical span at residues 384-404 (LLVGILFWIGYFNSALNPIIY). The Cytoplasmic portion of the chain corresponds to 405–508 (AYFNRDFRAA…MQQLHPLYTN (104 aa)). Residues 440–464 (RDLEFGGPSRRGTNGAQRTGSGSAE) form a disordered region. Over residues 450-461 (RGTNGAQRTGSG) the composition is skewed to polar residues.

It belongs to the G-protein coupled receptor 1 family. In the adult, expressed in the superior protocerebrum and the optic lobe medulla of the central nervous system, nurse cells of egg chambers in the ovary at oogenic stages 1-10, and spermatogonia and spermatocytes in the testis. Expressed in embryonic and larval ventral nerve cord and brain lobe, and the larval imaginal disk and larval salivary gland. Also expressed in larval synaptic boutons and retinal cells in the optic disk.

Its subcellular location is the cell membrane. Functionally, autoreceptor for octopamine, which is a neurotransmitter, neurohormone, and neuromodulator in invertebrates. Negatively regulates synaptic growth by activating the inhibitory G protein Galphao and limiting cAMP production. Antagonizes the action of Octbeta2R which stimulates synaptic growth. This is Octopamine receptor beta-1R from Drosophila melanogaster (Fruit fly).